A 3054-amino-acid chain; its full sequence is Genome polyprotein (3054 aa).

Positions 163–304 (FLPATSLSNV…FAVCHSMTHY (142 aa)) constitute a Peptidase S30 domain. Active-site for P1 proteinase activity residues include H214, D223, and S256. The Involved in interaction with stylet and aphid transmission motif lies at 358–361 (KITC). The short motif at 615-617 (PTK) is the Involved in virions binding and aphid transmission element. Residues 641 to 763 (MYIANEGYCY…ESEMKTYNVG (123 aa)) form the Peptidase C6 domain. Catalysis depends on for helper component proteinase activity residues C649 and H722. Residues 1234–1386 (EISHSPARDF…TQFPVKLKIE (153 aa)) form the Helicase ATP-binding domain. An ATP-binding site is contributed by 1247-1254 (GAVGSGKS). The DECH box signature appears at 1336–1339 (DECH). The 164-residue stretch at 1401-1564 (GANADVISCG…NLPVTTQSVS (164 aa)) folds into the Helicase C-terminal domain. The Nuclear localization signal signature appears at 1889–1896 (NKGKRKGT). An O-(5'-phospho-RNA)-tyrosine modification is found at Y1911. The region spanning 2038–2255 (GESLFKGPRD…VLWGGHKVFM (218 aa)) is the Peptidase C4 domain. Catalysis depends on for nuclear inclusion protein A activity residues H2083, D2118, and C2188. The region spanning 2521–2641 (WVYCDADGSQ…AIHPDKAERL (121 aa)) is the RdRp catalytic domain. Residues 2798 to 2827 (GADAGKKKDQKDDKVAEQASKDRDVNAGTS) are disordered. Over residues 2801 to 2822 (AGKKKDQKDDKVAEQASKDRDV) the composition is skewed to basic and acidic residues. T3038 bears the Phosphothreonine mark.

Belongs to the potyviridae genome polyprotein family. As to quaternary structure, interacts with host eIF4E protein (via cap-binding region); this interaction mediates the translation of the VPg-viral RNA conjugates. Part of a complex that comprises VPg, RNA, host EIF4E and EIF4G; this interaction mediates the translation of the VPg-viral RNA conjugates. Interaction is possible in susceptible hosts but impaired in resistant plants: the VPg of strain HAT interacts with tomato eIF4E1 and eIF4E2 as well as with Capsicum annuum eIF4E1 susceptible alleles pvr2(+), pvr2(3) and pvr2(9) but not with the resistant allele pvr2(2), the VPg of strain CAA10 interacts with C.annuum eIF4E1 susceptible alleles pvr2(+), pvr2(2), pvr2(3) and pvr2(9), the VPg of strain NW interacts at least with C.annuum eIF4E1. In terms of assembly, homodimer; disulfide-linked. VPg is uridylylated by the polymerase and is covalently attached to the 5'-end of the genomic RNA. This uridylylated form acts as a nucleotide-peptide primer for the polymerase. In terms of processing, potyviral RNA is expressed as two polyproteins which undergo post-translational proteolytic processing. Genome polyprotein is processed by NIa-pro, P1 and HC-pro proteinases resulting in the production of at least ten individual proteins. P3N-PIPO polyprotein is cleaved by P1 and HC-pro proteinases resulting in the production of three individual proteins. The P1 proteinase and the HC-pro cleave only their respective C-termini autocatalytically. 6K1 is essential for proper proteolytic separation of P3 from CI.

Its subcellular location is the host cytoplasmic vesicle. It localises to the host nucleus. It is found in the virion. The enzyme catalyses RNA(n) + a ribonucleoside 5'-triphosphate = RNA(n+1) + diphosphate. It catalyses the reaction Hydrolyzes glutaminyl bonds, and activity is further restricted by preferences for the amino acids in P6 - P1' that vary with the species of potyvirus, e.g. Glu-Xaa-Xaa-Tyr-Xaa-Gln-|-(Ser or Gly) for the enzyme from tobacco etch virus. The natural substrate is the viral polyprotein, but other proteins and oligopeptides containing the appropriate consensus sequence are also cleaved.. The catalysed reaction is Hydrolyzes a Gly-|-Gly bond at its own C-terminus, commonly in the sequence -Tyr-Xaa-Val-Gly-|-Gly, in the processing of the potyviral polyprotein.. Its function is as follows. Required for aphid transmission and also has proteolytic activity. Only cleaves a Gly-Gly dipeptide at its own C-terminus. Interacts with virions and aphid stylets. Acts as a suppressor of RNA-mediated gene silencing, also known as post-transcriptional gene silencing (PTGS), a mechanism of plant viral defense that limits the accumulation of viral RNAs. May have RNA-binding activity. Has helicase activity. It may be involved in replication. Functionally, indispensable for virus replication. Reduces the abundance of host transcripts related to jasmonic acid biosynthesis therefore altering the host defenses. In order to increase its own stability, decreases host protein degradation pathways. In terms of biological role, indispensable for virus replication. Its function is as follows. Mediates the cap-independent, EIF4E-dependent translation of viral genomic RNAs. Binds to the cap-binding site of host EIF4E and thus interferes with the host EIF4E-dependent mRNA export and translation. VPg-RNA directly binds EIF4E and is a template for transcription. Also forms trimeric complexes with EIF4E-EIF4G, which are templates for translation. Has RNA-binding and proteolytic activities. Functionally, an RNA-dependent RNA polymerase that plays an essential role in the virus replication. In terms of biological role, involved in aphid transmission, cell-to-cell and systemis movement, encapsidation of the viral RNA and in the regulation of viral RNA amplification. This Capsicum annuum (Capsicum pepper) protein is Genome polyprotein.